The sequence spans 234 residues: Accessory gland protein Acp29AB (234 aa).

The first 21 residues, 1–21 (MYASNLLYLLALWNLWDLSGG), serve as a signal peptide directing secretion. 2 N-linked (GlcNAc...) asparagine glycosylation sites follow: N61 and N164. The C-type lectin domain maps to 137-234 (VTCRKMNGHL…SFVCQADQWA (98 aa)). 2 cysteine pairs are disulfide-bonded: C139-C228 and C207-C220.

Main cells of the accessory gland and in seminal fluid.

The protein localises to the secreted. Its function is as follows. Responsible for physiological and behavioral changes in mated female flies. The protein is Accessory gland protein Acp29AB (Acp29AB) of Drosophila melanogaster (Fruit fly).